We begin with the raw amino-acid sequence, 816 residues long: Leucine--tRNA ligase (816 aa).

A 'HIGH' region motif is present at residues 40 to 51; that stretch reads SYPSGSQLHAGH. The 'KMSKS' region motif lies at 576-580; it reads KMSKS. Lysine 579 provides a ligand contact to ATP.

It belongs to the class-I aminoacyl-tRNA synthetase family.

It is found in the cytoplasm. The catalysed reaction is tRNA(Leu) + L-leucine + ATP = L-leucyl-tRNA(Leu) + AMP + diphosphate. The sequence is that of Leucine--tRNA ligase from Clostridium perfringens (strain 13 / Type A).